The sequence spans 563 residues: Arginine--tRNA ligase (563 aa).

Residues 122–132 carry the 'HIGH' region motif; that stretch reads PNIAKPISMGH.

It belongs to the class-I aminoacyl-tRNA synthetase family. In terms of assembly, monomer.

Its subcellular location is the cytoplasm. The catalysed reaction is tRNA(Arg) + L-arginine + ATP = L-arginyl-tRNA(Arg) + AMP + diphosphate. The protein is Arginine--tRNA ligase of Latilactobacillus sakei subsp. sakei (strain 23K) (Lactobacillus sakei subsp. sakei).